A 497-amino-acid polypeptide reads, in one-letter code: POU domain, class 3, transcription factor 3 (497 aa).

Residues 31–51 (GGGGGGGGGGGGAGGGGGGMQ) show a composition bias toward gly residues. Disordered stretches follow at residues 31–62 (GGGGGGGGGGGGAGGGGGGMQPGSAAVTSGAY), 121–189 (WSGS…WGAA), 230–316 (NGML…TPTS), and 458–497 (EKRMTPPGIQQQTPDDVYSQVGTVSADTPPPHHGLQTSVQ). Pro residues-rich tracts occupy residues 133–145 (QQPPRPPPPPPQG) and 170–180 (HLGPPPPPPHQ). Gly residues predominate over residues 240–250 (GGGGGGAGGGA). The span at 269 to 286 (HHHHHHHHAHPHPPHPHH) shows a compositional bias: basic residues. One can recognise a POU-specific domain in the interval 311–385 (EDTPTSDDLE…LLNKWLEEAD (75 aa)). Positions 403–462 (KRKKRTSIEVSVKGALESHFLKCPKPSAQEITNLADSLQLEKEVVRVWFCNRRQKEKRMT) form a DNA-binding region, homeobox. Positions 465–483 (GIQQQTPDDVYSQVGTVSA) are enriched in polar residues.

Belongs to the POU transcription factor family. Class-3 subfamily. As to quaternary structure, homodimer. In terms of tissue distribution, brain.

Its subcellular location is the nucleus. Functionally, transcription factor that acts synergistically with SOX11 and SOX4. Plays a role in neuronal development. Is implicated in an enhancer activity at the embryonic met-mesencephalic junction; the enhancer element contains the octamer motif (5'-ATTTGCAT-3'). The polypeptide is POU domain, class 3, transcription factor 3 (Pou3f3) (Rattus norvegicus (Rat)).